An 885-amino-acid polypeptide reads, in one-letter code: Putative membrane protein YdgH (885 aa).

Transmembrane regions (helical) follow at residues 9 to 29 (WAIAAIVLALTVVLSLFSPNL), 181 to 201 (IIGLLLIVFRSVVTPFIPIVV), 202 to 222 (VGFSYLISQSILGILVYNVDF), 227 to 247 (FTQTFLVAILFGIGTDYCILL), 278 to 298 (ISGFAVLIGFSALGFAKFAIF), 304 to 324 (VAVGVGILMIILYTLLPLFMV), and 354 to 374 (VARPFLFIVITVVITLPFILT). The interval 498–518 (MAGQTGSASNGGSGGSLGDAA) is disordered. 5 helical membrane passes run 716 to 736 (MVIMIIGLFIVLTILFRSMIM), 740 to 760 (MIASLLLTYYTSISITELIFV), 772 to 792 (VPFFSFVILIALGVDYSIFLL), 817 to 837 (VIITAAIILAGTFAAMMPSGV), and 847 to 867 (IIIGLLLYGLVILPLFIPAII).

The protein belongs to the resistance-nodulation-cell division (RND) (TC 2.A.6) family. MmpL subfamily.

The protein localises to the cell membrane. This chain is Putative membrane protein YdgH (ydgH), found in Bacillus subtilis (strain 168).